The sequence spans 99 residues: Bombyxin A-1 homolog (99 aa).

The signal sequence occupies residues 1–19 (MKTQVLFLVFALAAVMVSG). 3 cysteine pairs are disulfide-bonded: Cys-27–Cys-86, Cys-39–Cys-99, and Cys-85–Cys-90. The propeptide at 48–76 (TPYISPENEGYGWRWLEPQRARQLDGARG) is c peptide like.

The protein belongs to the insulin family. Heterodimer of a B chain and an A chain linked by two disulfide bonds.

The protein resides in the secreted. In terms of biological role, brain peptide responsible for activation of prothoracic glands to produce ecdysone in insects. The sequence is that of Bombyxin A-1 homolog (SBXA1) from Samia cynthia (Ailanthus silkmoth).